The sequence spans 94 residues: DNA-directed RNA polymerase subunit Rpo11 (94 aa).

This sequence belongs to the archaeal Rpo11/eukaryotic RPB11/RPC19 RNA polymerase subunit family. As to quaternary structure, part of the RNA polymerase complex.

The protein localises to the cytoplasm. The enzyme catalyses RNA(n) + a ribonucleoside 5'-triphosphate = RNA(n+1) + diphosphate. In terms of biological role, DNA-dependent RNA polymerase (RNAP) catalyzes the transcription of DNA into RNA using the four ribonucleoside triphosphates as substrates. This Thermococcus kodakarensis (strain ATCC BAA-918 / JCM 12380 / KOD1) (Pyrococcus kodakaraensis (strain KOD1)) protein is DNA-directed RNA polymerase subunit Rpo11.